A 427-amino-acid chain; its full sequence is Serine hydroxymethyltransferase (427 aa).

(6S)-5,6,7,8-tetrahydrofolate contacts are provided by residues L122 and 126 to 128; that span reads GHL. Position 231 is an N6-(pyridoxal phosphate)lysine (K231). A (6S)-5,6,7,8-tetrahydrofolate-binding site is contributed by 355–357; the sequence is SPF.

This sequence belongs to the SHMT family. As to quaternary structure, homodimer. Requires pyridoxal 5'-phosphate as cofactor.

The protein localises to the cytoplasm. It catalyses the reaction (6R)-5,10-methylene-5,6,7,8-tetrahydrofolate + glycine + H2O = (6S)-5,6,7,8-tetrahydrofolate + L-serine. It functions in the pathway one-carbon metabolism; tetrahydrofolate interconversion. Its pathway is amino-acid biosynthesis; glycine biosynthesis; glycine from L-serine: step 1/1. Its function is as follows. Catalyzes the reversible interconversion of serine and glycine with tetrahydrofolate (THF) serving as the one-carbon carrier. This reaction serves as the major source of one-carbon groups required for the biosynthesis of purines, thymidylate, methionine, and other important biomolecules. Also exhibits THF-independent aldolase activity toward beta-hydroxyamino acids, producing glycine and aldehydes, via a retro-aldol mechanism. The polypeptide is Serine hydroxymethyltransferase (Nostoc sp. (strain PCC 7120 / SAG 25.82 / UTEX 2576)).